The following is an 873-amino-acid chain: Bifunctional uridylyltransferase/uridylyl-removing enzyme (873 aa).

A uridylyltransferase region spans residues 1 to 332 (MPYQCPITFN…NGGQTQEAEI (332 aa)). The segment at 333–692 (LDNDFQRRGS…ISKKATRGGT (360 aa)) is uridylyl-removing. Positions 451–573 (VDEHSIRLLK…VRDEESLELL (123 aa)) constitute an HD domain. 2 consecutive ACT domains span residues 693–777 (EVFV…RTPR) and 800–873 (LMEL…ELAP).

This sequence belongs to the GlnD family. Mg(2+) serves as cofactor.

It carries out the reaction [protein-PII]-L-tyrosine + UTP = [protein-PII]-uridylyl-L-tyrosine + diphosphate. The enzyme catalyses [protein-PII]-uridylyl-L-tyrosine + H2O = [protein-PII]-L-tyrosine + UMP + H(+). Uridylyltransferase (UTase) activity is inhibited by glutamine, while glutamine activates uridylyl-removing (UR) activity. In terms of biological role, modifies, by uridylylation and deuridylylation, the PII regulatory proteins (GlnB and homologs), in response to the nitrogen status of the cell that GlnD senses through the glutamine level. Under low glutamine levels, catalyzes the conversion of the PII proteins and UTP to PII-UMP and PPi, while under higher glutamine levels, GlnD hydrolyzes PII-UMP to PII and UMP (deuridylylation). Thus, controls uridylylation state and activity of the PII proteins, and plays an important role in the regulation of nitrogen assimilation and metabolism. The sequence is that of Bifunctional uridylyltransferase/uridylyl-removing enzyme from Vibrio atlanticus (strain LGP32) (Vibrio splendidus (strain Mel32)).